The chain runs to 249 residues: Methylthioribulose-1-phosphate dehydratase (249 aa).

The Zn(2+) site is built by H103 and H105.

This sequence belongs to the aldolase class II family. MtnB subfamily. The cofactor is Zn(2+).

The catalysed reaction is 5-(methylsulfanyl)-D-ribulose 1-phosphate = 5-methylsulfanyl-2,3-dioxopentyl phosphate + H2O. It functions in the pathway amino-acid biosynthesis; L-methionine biosynthesis via salvage pathway; L-methionine from S-methyl-5-thio-alpha-D-ribose 1-phosphate: step 2/6. Catalyzes the dehydration of methylthioribulose-1-phosphate (MTRu-1-P) into 2,3-diketo-5-methylthiopentyl-1-phosphate (DK-MTP-1-P). This is Methylthioribulose-1-phosphate dehydratase from Leptospira interrogans serogroup Icterohaemorrhagiae serovar copenhageni (strain Fiocruz L1-130).